We begin with the raw amino-acid sequence, 397 residues long: Ubiquitin-like modifier-activating enzyme 5 (397 aa).

The ATP site is built by Gly-77, Asp-98, Lys-121, Asn-144, and Asn-178. Residues Cys-220 and Cys-223 each contribute to the Zn(2+) site. Cys-244 (glycyl thioester intermediate) is an active-site residue. The Zn(2+) site is built by Cys-297 and Cys-302. A UFM1-interacting sequence (UIS) motif is present at residues 329–341 (VVHEDNDWGIELV). The segment at 342 to 372 (SEVSEEELKAASGPVPDLPEGIKVAYTIPIT) is linker. Residues 382 to 397 (DSEQSLDELMAQMKNL) carry the UFC1-binding sequence (UFC) motif.

This sequence belongs to the ubiquitin-activating E1 family. UBA5 subfamily. Homodimer; homodimerization is required for ufm1 activation. Interacts (via UIS motif) with ufm1; binds ufm1 via a trans-binding mechanism in which ufm1 interacts with distinct sites in both subunits of the uba5 homodimer. Interacts (via C-terminus) with ufc1.

It is found in the cytoplasm. The protein resides in the nucleus. The protein localises to the endoplasmic reticulum membrane. It localises to the golgi apparatus. Functionally, E1-like enzyme which specifically catalyzes the first step in ufmylation. Activates ufm1 by first adenylating its C-terminal glycine residue with ATP, and thereafter linking this residue to the side chain of a cysteine residue in E1, yielding a ufm1-E1 thioester and free AMP. Activates ufm1 via a trans-binding mechanism, in which ufm1 interacts with distinct sites in both subunits of the uba5 homodimer. Trans-binding also promotes stabilization of the uba5 homodimer, and enhances ATP-binding. Transfer of ufm1 from uba5 to the E2-like enzyme UFC1 also takes place using a trans mechanism. Ufmylation plays a key role in various processes, such as ribosome recycling, response to DNA damage, interferon response or reticulophagy (also called ER-phagy). This is Ubiquitin-like modifier-activating enzyme 5 from Xenopus laevis (African clawed frog).